Reading from the N-terminus, the 253-residue chain is Nurim homolog (253 aa).

Residues 1 to 2 (MT) are Nuclear-facing. Residues 3–30 (SIAKSIVLLASLATFAYSLYVVGSLMMF) form a helical membrane-spanning segment. Over 31 to 56 (LSTPRSISKAHTWIFNLLDNKSRLQT) the chain is Perinuclear space. A helical transmembrane segment spans residues 57-78 (AYGPVVFDTLYLIGFIFQHSFL). Residues 79-96 (KSAVVKKLLAKLGLSGAE) lie on the Nuclear side of the membrane. Residues 97–113 (RTIYSLTSSLCLHYLIV) form a helical membrane-spanning segment. The Perinuclear space portion of the chain corresponds to 114 to 132 (NWLPAQSIVLWQIDVEQSA). A helical membrane pass occupies residues 133 to 161 (PLWWTFVITHGICWVVIFGGSLVMDLPEL). The Nuclear portion of the chain corresponds to 162–188 (LGVKQAYYDLKAYGPPISYKSGELRNL). A helical transmembrane segment spans residues 189-207 (YAHVRHPSFVGLSVILFAT). At 208–213 (NVMSVD) the chain is on the perinuclear space side. Residues 214–231 (RLVMALLLTTYMYLAWST) traverse the membrane as a helical segment. At 232–253 (DQKDVAYQKIQLQRKKLELKAK) the chain is on the nuclear side.

It belongs to the nurim family.

It localises to the nucleus inner membrane. The protein is Nurim homolog (nrm) of Drosophila melanogaster (Fruit fly).